We begin with the raw amino-acid sequence, 414 residues long: Putative nickel insertion protein (414 aa).

The segment at 70–91 is disordered; sequence ATHHDHDHSQDQTHHHHADHAP.

The protein belongs to the LarC family.

This is Putative nickel insertion protein from Picosynechococcus sp. (strain ATCC 27264 / PCC 7002 / PR-6) (Agmenellum quadruplicatum).